The chain runs to 308 residues: Aldo-keto reductase AKR2E4 (308 aa).

Residues 22–29 (GTGRGTAK) and Asp53 each bind NADP(+). Tyr58 serves as the catalytic Proton donor. Residues 158 to 159 (SN), Arg215, and 259 to 269 (KSTNKQRIAQN) each bind NADP(+).

The protein belongs to the short-chain dehydrogenases/reductases (SDR) family. As to expression, detected in hemolymph (at protein level). Detected in larval ovary.

Its activity is regulated as follows. Subject to substrate inhibition by high levels of 3-dehydroecdysone. Its function is as follows. NADP-dependent oxidoreductase with high 3-dehydroecdysone reductase activity. May play a role in the regulation of molting. Has lower activity with phenylglyoxal and isatin (in vitro). Has no activity with NADH as cosubstrate. Has no activity with nitrobenzaldehyde and 3-hydroxybenzaldehyde. This Bombyx mori (Silk moth) protein is Aldo-keto reductase AKR2E4 (akr2e).